A 102-amino-acid polypeptide reads, in one-letter code: MAQEVRLRLSSTDHYKLEEVCERIKKVVEETGAQMSGPIPLPTKRLLVPTRKSPDGEGKATWDKWEMRIHKRLIDIKGDERTIRRLMRIHIPEEVHVEIIMK.

The segment at 34-59 is disordered; sequence QMSGPIPLPTKRLLVPTRKSPDGEGK.

Belongs to the universal ribosomal protein uS10 family. In terms of assembly, part of the 30S ribosomal subunit.

Functionally, involved in the binding of tRNA to the ribosomes. The protein is Small ribosomal subunit protein uS10 of Methanopyrus kandleri (strain AV19 / DSM 6324 / JCM 9639 / NBRC 100938).